The primary structure comprises 149 residues: Calmodulin (149 aa).

Ala-2 carries the post-translational modification N-acetylalanine. EF-hand domains are found at residues 8-43, 44-79, 81-116, and 117-149; these read EQIA…LGQN, PTEA…KMKD, DSEE…LGEK, and LTDE…MTSK. Positions 21, 23, 25, 27, 32, 57, 59, 61, 63, 68, 94, 96, 98, and 105 each coordinate Ca(2+). Residue Lys-116 is modified to N6,N6,N6-trimethyllysine. Residues Asp-130, Asp-132, Asp-134, Gln-136, and Glu-141 each coordinate Ca(2+).

This sequence belongs to the calmodulin family.

Calmodulin mediates the control of a large number of enzymes, ion channels and other proteins by Ca(2+). Among the enzymes to be stimulated by the calmodulin-Ca(2+) complex are a number of protein kinases and phosphatases. This chain is Calmodulin, found in Pyuridae sp. (Sea squirt).